A 324-amino-acid polypeptide reads, in one-letter code: Kelch domain-containing protein AF_2170 (324 aa).

Kelch repeat units lie at residues 229 to 276 and 277 to 323; these read YIFA…VGGE and YIYI…NNGK.

The sequence is that of Kelch domain-containing protein AF_2170 from Archaeoglobus fulgidus (strain ATCC 49558 / DSM 4304 / JCM 9628 / NBRC 100126 / VC-16).